Reading from the N-terminus, the 541-residue chain is MPSLLVLTFSPCVLLGWALLAGGTGGGGVGGGGGGAGIGGGRQEREALPPQKIEVLVLLPQDDSYLFSLTRVRPAIEYALRSVEGNGTGRRLLPPGTRFQVAYEDSDCGNRALFSLVDRVAAARGAKPDLILGPVCEYAAAPVARLASHWDLPMLSAGALAAGFQHKDSEYSHLTRVAPAYAKMGEMMLALFRHHHWSRAALVYSDDKLERNCYFTLEGVHEVFQEEGLHTSIYSFDETKDLDLEDIVRNIQASERVVIMCASSDTIRSIMLVAHRHGMTSGDYAFFNIELFNSSSYGDGSWKRGDKHDFEAKQAYSSLQTVTLLRTVKPEFEKFSMEVKSSVEKQGLNMEDYVNMFVEGFHDAILLYVLALHEVLRAGYSKKDGGKIIQQTWNRTFEGIAGQVSIDANGDRYGDFSVIAMTDVEAGTQEVIGDYFGKEGRFEMRPNVKYPWGPLKLRIDENRIVEHTNSSPCKSSGGLEESAVTGIVVGALLGAGLLMAFYFFRKKYRITIERRTQQEESNLGKHRELREDSIRSHFSVA.

Positions 1–26 are cleaved as a signal peptide; it reads MPSLLVLTFSPCVLLGWALLAGGTGG. The Extracellular segment spans residues 27–481; that stretch reads GGVGGGGGGA…PCKSSGGLEE (455 aa). N86 carries an N-linked (GlcNAc...) (complex) asparagine glycan. Chloride is bound by residues S106, V135, and C136. Intrachain disulfides connect C108–C136 and C213–C261. Residue N293 is glycosylated (N-linked (GlcNAc...) (high mannose) asparagine). N-linked (GlcNAc...) (complex) asparagine glycosylation occurs at N394. A helical transmembrane segment spans residues 482–504; that stretch reads SAVTGIVVGALLGAGLLMAFYFF. Topologically, residues 505–541 are cytoplasmic; that stretch reads RKKYRITIERRTQQEESNLGKHRELREDSIRSHFSVA.

This sequence belongs to the ANF receptor family. As to quaternary structure, homodimer; disulfide-linked. Dimers can also be formed through the C-terminal cysteine of isoform 2. Interacts with OSTN.

The protein localises to the cell membrane. Its function is as follows. Receptor for the natriuretic peptide hormones, binding with similar affinities atrial natriuretic peptide NPPA/ANP, brain natriuretic peptide NPPB/BNP, and C-type natriuretic peptide NPPC/CNP. May function as a clearance receptor for NPPA, NPPB and NPPC, regulating their local concentrations and effects. Acts as a regulator of osteoblast differentiation and bone growth by binding to its ligand osteocrin, thereby preventing binding between NPR3/NPR-C and natriuretic peptides, leading to increase cGMP production. The sequence is that of Atrial natriuretic peptide receptor 3 (NPR3) from Homo sapiens (Human).